Reading from the N-terminus, the 912-residue chain is Protein translocase subunit SecA (912 aa).

Residues Gln87, 105 to 109, and Asp512 contribute to the ATP site; that span reads GEGKT. Zn(2+) contacts are provided by Cys896, Cys898, Cys907, and His908.

Belongs to the SecA family. Monomer and homodimer. Part of the essential Sec protein translocation apparatus which comprises SecA, SecYEG and auxiliary proteins SecDF-YajC and YidC. Requires Zn(2+) as cofactor.

It is found in the cell inner membrane. The protein resides in the cytoplasm. It catalyses the reaction ATP + H2O + cellular proteinSide 1 = ADP + phosphate + cellular proteinSide 2.. Part of the Sec protein translocase complex. Interacts with the SecYEG preprotein conducting channel. Has a central role in coupling the hydrolysis of ATP to the transfer of proteins into and across the cell membrane, serving both as a receptor for the preprotein-SecB complex and as an ATP-driven molecular motor driving the stepwise translocation of polypeptide chains across the membrane. This chain is Protein translocase subunit SecA, found in Pseudomonas fluorescens (strain Pf0-1).